The following is an 87-amino-acid chain: Protein ORF3 (87 aa).

The disordered stretch occupies residues 58 to 87; that stretch reads GALNNAPREPSAPPLSQTLSPRQVLARYQM. The PTAP/PSAP motif signature appears at 67 to 70; the sequence is PSAP.

The protein belongs to the hepevirus ORF3 protein family. Post-translationally, palmitoylated in the N-terminus.

The protein resides in the host endoplasmic reticulum membrane. It is found in the host cytoplasm. Its subcellular location is the host cytoskeleton. The protein localises to the virion. It localises to the host cell membrane. In terms of biological role, small multifunctional phosphoprotein involved in virion morphogenesis, egress and counteracting host innate immunity. The sequence is that of Protein ORF3 from Avian hepatitis E virus (isolate Chicken/California/Meng) (AHEV).